Here is a 67-residue protein sequence, read N- to C-terminus: DNA-directed RNA polymerase subunit omega (67 aa).

This sequence belongs to the RNA polymerase subunit omega family. As to quaternary structure, the RNAP catalytic core consists of 2 alpha, 1 beta, 1 beta' and 1 omega subunit. When a sigma factor is associated with the core the holoenzyme is formed, which can initiate transcription.

The enzyme catalyses RNA(n) + a ribonucleoside 5'-triphosphate = RNA(n+1) + diphosphate. Promotes RNA polymerase assembly. Latches the N- and C-terminal regions of the beta' subunit thereby facilitating its interaction with the beta and alpha subunits. The protein is DNA-directed RNA polymerase subunit omega of Listeria monocytogenes serotype 4a (strain HCC23).